Here is a 278-residue protein sequence, read N- to C-terminus: Biotin synthase (278 aa).

The region spanning 1–227 is the Radical SAM core domain; it reads MQIMLCAISN…QSVVMVAGGR (227 aa). [4Fe-4S] cluster is bound by residues cysteine 16, cysteine 20, and cysteine 23. [2Fe-2S] cluster contacts are provided by cysteine 60, asparagine 96, and cysteine 154.

Belongs to the radical SAM superfamily. Biotin synthase family. In terms of assembly, homodimer. The cofactor is [4Fe-4S] cluster. It depends on [2Fe-2S] cluster as a cofactor.

It catalyses the reaction (4R,5S)-dethiobiotin + (sulfur carrier)-SH + 2 reduced [2Fe-2S]-[ferredoxin] + 2 S-adenosyl-L-methionine = (sulfur carrier)-H + biotin + 2 5'-deoxyadenosine + 2 L-methionine + 2 oxidized [2Fe-2S]-[ferredoxin]. Its pathway is cofactor biosynthesis; biotin biosynthesis; biotin from 7,8-diaminononanoate: step 2/2. Catalyzes the conversion of dethiobiotin (DTB) to biotin by the insertion of a sulfur atom into dethiobiotin via a radical-based mechanism. This Campylobacter jejuni subsp. jejuni serotype O:2 (strain ATCC 700819 / NCTC 11168) protein is Biotin synthase.